The primary structure comprises 213 residues: Cytochrome c biogenesis ATP-binding export protein CcmA (213 aa).

Residues 3-211 enclose the ABC transporter domain; it reads LTAENLGVRR…QMTGFAGVET (209 aa). 35–42 lines the ATP pocket; the sequence is GRNGSGKS.

This sequence belongs to the ABC transporter superfamily. CcmA exporter (TC 3.A.1.107) family. The complex is composed of two ATP-binding proteins (CcmA) and two transmembrane proteins (CcmB).

It is found in the cell inner membrane. The catalysed reaction is heme b(in) + ATP + H2O = heme b(out) + ADP + phosphate + H(+). Its function is as follows. Part of the ABC transporter complex CcmAB involved in the biogenesis of c-type cytochromes; once thought to export heme, this seems not to be the case, but its exact role is uncertain. Responsible for energy coupling to the transport system. This is Cytochrome c biogenesis ATP-binding export protein CcmA from Agrobacterium fabrum (strain C58 / ATCC 33970) (Agrobacterium tumefaciens (strain C58)).